We begin with the raw amino-acid sequence, 275 residues long: tRNA-splicing endonuclease subunit SEN34 (275 aa).

Catalysis depends on residues Tyr209, His217, and Lys250.

Belongs to the tRNA-intron endonuclease family. Heterotetramer composed of SEN2, SEN15, SEN34 and SEN54. Interacts directly with SEN15.

The protein localises to the nucleus. It localises to the endomembrane system. Its subcellular location is the mitochondrion outer membrane. It catalyses the reaction pretRNA = a 3'-half-tRNA molecule with a 5'-OH end + a 5'-half-tRNA molecule with a 2',3'-cyclic phosphate end + an intron with a 2',3'-cyclic phosphate and a 5'-hydroxyl terminus.. Constitutes one of the two catalytic subunit of the tRNA-splicing endonuclease complex, a complex responsible for identification and cleavage of the splice sites in pre-tRNA. It cleaves pre-tRNA at the 5'- and 3'-splice sites to release the intron. The products are an intron and two tRNA half-molecules bearing 2',3'-cyclic phosphate and 5'-OH termini. There are no conserved sequences at the splice sites, but the intron is invariably located at the same site in the gene, placing the splice sites an invariant distance from the constant structural features of the tRNA body. It probably carries the active site for 3'-splice site cleavage. In Saccharomyces cerevisiae (strain ATCC 204508 / S288c) (Baker's yeast), this protein is tRNA-splicing endonuclease subunit SEN34 (SEN34).